The sequence spans 317 residues: Zinc transporter ZIP3 (317 aa).

Residues 1–3 are Extracellular-facing; that stretch reads MSQ. The chain crosses the membrane as a helical span at residues 4 to 24; the sequence is LLVAKVLCMVGVFFFMLLGSL. Residues 25–42 lie on the Cytoplasmic side of the membrane; sequence LPVKVIEADFEKAHRSKK. The helical transmembrane segment at 43-63 threads the bilayer; the sequence is VLSLCNTFGGGVFLATCFNAL. Residues 64–85 lie on the Extracellular side of the membrane; sequence LPAVRDKLQQVLSLGHISTDYP. The chain crosses the membrane as a helical span at residues 86-106; that stretch reads LAETLMMVGFFLTVFVEQLVL. The Cytoplasmic portion of the chain corresponds to 107–172; that stretch reads TFRRERPPFI…RELGRPGPLR (66 aa). Phosphoserine occurs at positions 125 and 129. A helical transmembrane segment spans residues 173–193; that stretch reads LLSLVFALSAHSVFEGLALGL. Residues 194 to 199 are Extracellular-facing; sequence QEEGER. A helical membrane pass occupies residues 200–220; it reads VVSLFVGVAVHETLVAVALGI. At 221 to 232 the chain is on the cytoplasmic side; that stretch reads SMARSAVPLRDA. Residues 233-253 traverse the membrane as a helical segment; the sequence is AKLAVTVSAMIPVGIGLGLGI. Over 254–265 the chain is Extracellular; it reads ESARSVASSVAS. A helical transmembrane segment spans residues 266–286; it reads ALLQGLAGGTFLFVTFLEILA. At 287–294 the chain is on the cytoplasmic side; it reads KELEERSE. The helical transmembrane segment at 295-315 threads the bilayer; it reads QLLKVLFLVLGYAVLAGMVFL. At 316 to 317 the chain is on the extracellular side; that stretch reads KW.

It belongs to the ZIP transporter (TC 2.A.5) family.

It localises to the cell membrane. Its subcellular location is the apical cell membrane. The catalysed reaction is Zn(2+)(in) = Zn(2+)(out). Its function is as follows. Transporter for the divalent cation Zn(2+). Mediates the influx of Zn(2+) into cells from extracellular space. Controls Zn(2+) accumulation into dentate gyrus granule cells in the hippocampus. Mediates Zn(2+) reuptake from the secreted milk within the alveolar lumen. This is Zinc transporter ZIP3 (Slc39a3) from Rattus norvegicus (Rat).